The following is a 417-amino-acid chain: Tryptophan synthase beta chain (417 aa).

Lysine 99 is modified (N6-(pyridoxal phosphate)lysine).

This sequence belongs to the TrpB family. In terms of assembly, tetramer of two alpha and two beta chains. The cofactor is pyridoxal 5'-phosphate.

It catalyses the reaction (1S,2R)-1-C-(indol-3-yl)glycerol 3-phosphate + L-serine = D-glyceraldehyde 3-phosphate + L-tryptophan + H2O. Its pathway is amino-acid biosynthesis; L-tryptophan biosynthesis; L-tryptophan from chorismate: step 5/5. Functionally, the beta subunit is responsible for the synthesis of L-tryptophan from indole and L-serine. This is Tryptophan synthase beta chain from Corynebacterium glutamicum (strain R).